Consider the following 337-residue polypeptide: Eukaryotic translation initiation factor 3 subunit H (337 aa).

The region spanning 25-158 is the MPN domain; the sequence is VQIEGLAVLK…LKALKLSDSF (134 aa). Serine 178 carries the phosphoserine; by ATPK1 modification. Positions 267 to 278 are enriched in basic and acidic residues; it reads RRTENMARKSAG. The disordered stretch occupies residues 267 to 290; that stretch reads RRTENMARKSAGEEPLPEEDPSNP.

Belongs to the eIF-3 subunit H family. As to quaternary structure, component of the eukaryotic translation initiation factor 3 (eIF-3) complex. Interacts directly with TIF3A1, TIF3B1, TIF3C1, TIF3E1 and TIF3F1. Associates with the CSN (COP9 signalosome) complex. Binds to CSN1, CSN7 and CSN8. Interacts with ATPK1. In response to auxin (NAA), phosphorylated at Ser-178 by ATPK1 and binds to polysomes via TOR signaling. This phosphorylation is repressed by Torin-1. In terms of tissue distribution, mostly expressed in roots and flowers, and, to a lower extent, in leaves, stems and siliques.

The protein localises to the cytoplasm. Functionally, component of the eukaryotic translation initiation factor 3 (eIF-3) complex, which is involved in protein synthesis of a specialized repertoire of mRNAs and, together with other initiation factors, stimulates binding of mRNA and methionyl-tRNAi to the 40S ribosome. The eIF-3 complex specifically targets and initiates translation of a subset of mRNAs involved in cell proliferation (Potential). Regulates translation initiation of specific 5' mRNAs harboring multiple upstream open reading frames (uORFs) in their 5' leader sequence (e.g. BETA-OHASE 2 and LHY). In Arabidopsis thaliana (Mouse-ear cress), this protein is Eukaryotic translation initiation factor 3 subunit H (TIF3H1).